The chain runs to 1488 residues: Chromosome partition protein MukB (1488 aa).

34-41 lines the ATP pocket; that stretch reads GGNGAGKS. Coiled coils occupy residues 326–413, 444–472, and 509–602; these read LEAD…QTRA, LDTF…QTAH, and RHLA…RRAP. Residues 666-783 form a flexible hinge region; sequence PGGAEDQRLN…SLPIFGRAAR (118 aa). Coiled coils occupy residues 835–923, 977–1116, and 1209–1265; these read EAEI…AKLE, EMLS…AKAG, and VEAI…LQSV.

This sequence belongs to the SMC family. MukB subfamily. As to quaternary structure, homodimerization via its hinge domain. Binds to DNA via its C-terminal region. Interacts, and probably forms a ternary complex, with MukE and MukF via its C-terminal region. The complex formation is stimulated by calcium or magnesium. Interacts with tubulin-related protein FtsZ.

The protein localises to the cytoplasm. The protein resides in the nucleoid. Plays a central role in chromosome condensation, segregation and cell cycle progression. Functions as a homodimer, which is essential for chromosome partition. Involved in negative DNA supercoiling in vivo, and by this means organize and compact chromosomes. May achieve or facilitate chromosome segregation by condensation DNA from both sides of a centrally located replisome during cell division. The sequence is that of Chromosome partition protein MukB from Salmonella paratyphi C (strain RKS4594).